An 802-amino-acid chain; its full sequence is Oligophrenin-1 (802 aa).

One can recognise a PH domain in the interval 265-368 (QPTIEGYLYT…WMEAMDGKEP (104 aa)). Residues 380–564 (MELNEVGFKF…ILIEHFGKIY (185 aa)) form the Rho-GAP domain. Disordered regions lie at residues 641–663 (QKSG…CQTE) and 682–802 (TKAI…GDES). Residues 716–732 (HHKEGDTDCFSKVRPPG) show a composition bias toward basic and acidic residues. Positions 751–768 (SSTSQKPESKPETVSSNA) are enriched in polar residues.

Interacts with HOMER1. Interacts with AMPA receptor complexes. Interacts with SH3GL2 (endophilin-A1). Interacts (via C-terminus) with NR1D1. High expression in brain, particularly in the cerebellum, hippocampus, thalamus, frontal lobes, sensory cortex. Found in the myelin sheaths of peripheral nerves, chromaffin cells within the adrenal medulla, and in extra-adrenal chromaffin cells associated with celiac ganglia.

Its subcellular location is the postsynapse. It is found in the presynapse. It localises to the cell projection. The protein localises to the axon. The protein resides in the dendritic spine. Its subcellular location is the dendrite. It is found in the cytoplasm. In terms of biological role, stimulates GTP hydrolysis of members of the Rho family. Its action on RHOA activity and signaling is implicated in growth and stabilization of dendritic spines, and therefore in synaptic function, in hippocampal neurons. Critical for the stabilization of AMPA receptors at postsynaptic sites. Critical for the regulation of synaptic vesicle endocytosis at pre-synaptic terminals. Required for the localization of NR1D1 to dendrites, can suppress its repressor activity and protect it from proteasomal degradation. The polypeptide is Oligophrenin-1 (Ophn1) (Rattus norvegicus (Rat)).